Here is a 237-residue protein sequence, read N- to C-terminus: 1-(5-phosphoribosyl)-5-[(5-phosphoribosylamino)methylideneamino] imidazole-4-carboxamide isomerase (237 aa).

Residue D8 is the Proton acceptor of the active site. D129 serves as the catalytic Proton donor.

The protein belongs to the HisA/HisF family.

The protein localises to the cytoplasm. It catalyses the reaction 1-(5-phospho-beta-D-ribosyl)-5-[(5-phospho-beta-D-ribosylamino)methylideneamino]imidazole-4-carboxamide = 5-[(5-phospho-1-deoxy-D-ribulos-1-ylimino)methylamino]-1-(5-phospho-beta-D-ribosyl)imidazole-4-carboxamide. It functions in the pathway amino-acid biosynthesis; L-histidine biosynthesis; L-histidine from 5-phospho-alpha-D-ribose 1-diphosphate: step 4/9. The sequence is that of 1-(5-phosphoribosyl)-5-[(5-phosphoribosylamino)methylideneamino] imidazole-4-carboxamide isomerase from Alkaliphilus metalliredigens (strain QYMF).